We begin with the raw amino-acid sequence, 255 residues long: Hydroxyacylglutathione hydrolase (255 aa).

His56, His58, Asp60, His61, His114, Asp133, and His171 together coordinate Zn(2+).

The protein belongs to the metallo-beta-lactamase superfamily. Glyoxalase II family. As to quaternary structure, monomer. Zn(2+) is required as a cofactor.

It catalyses the reaction an S-(2-hydroxyacyl)glutathione + H2O = a 2-hydroxy carboxylate + glutathione + H(+). It participates in secondary metabolite metabolism; methylglyoxal degradation; (R)-lactate from methylglyoxal: step 2/2. In terms of biological role, thiolesterase that catalyzes the hydrolysis of S-D-lactoyl-glutathione to form glutathione and D-lactic acid. The chain is Hydroxyacylglutathione hydrolase from Ruegeria pomeroyi (strain ATCC 700808 / DSM 15171 / DSS-3) (Silicibacter pomeroyi).